Reading from the N-terminus, the 114-residue chain is Iron-sulfur cluster insertion protein ErpA (114 aa).

Residues cysteine 42, cysteine 106, and cysteine 108 each coordinate iron-sulfur cluster.

It belongs to the HesB/IscA family. As to quaternary structure, homodimer. It depends on iron-sulfur cluster as a cofactor.

Functionally, required for insertion of 4Fe-4S clusters for at least IspG. This chain is Iron-sulfur cluster insertion protein ErpA, found in Buchnera aphidicola subsp. Acyrthosiphon pisum (strain 5A).